A 437-amino-acid polypeptide reads, in one-letter code: Putative O-antigen export protein (437 aa).

Transmembrane regions (helical) follow at residues 3 to 23 (VPTHIIVAASAWGSRLVSIFI), 41 to 61 (AVFTVIGSLVGWFLLADFGLG), 81 to 101 (LVLSAVIAIIPIFILFIILIL), 129 to 149 (VASFIFLTTSIGNLAYKIWFS), 152 to 172 (KGWVSNIIPALSSIVGLVFLM), 185 to 205 (IIFSIYCFYIPAAFFGVISTL), 231 to 251 (GGFFLFSVLSALVLQVDYIVM), 269 to 289 (TFGLINFIYAALLQSLWPVCA), 310 to 330 (FGFIIVIASSFVIFLLKDFIV), 332 to 352 (ILAPGKDFYFPISLIILFSFY), 375 to 395 (LWISVPFQAVLSGSLQWVGAV), and 398 to 418 (GLVGLLCGLIASFLITVSWWL).

Its subcellular location is the cell inner membrane. The protein operates within bacterial outer membrane biogenesis; LPS O-antigen biosynthesis. Functionally, may be involved in the translocation process of the nascent O-polysaccharide molecules and/or its ligation to lipid A core units. This Yersinia pseudotuberculosis protein is Putative O-antigen export protein (rfbX).